We begin with the raw amino-acid sequence, 27 residues long: M-ectatotoxin-Eb2a (27 aa).

Expressed by the venom gland.

It localises to the secreted. Functionally, antimicrobial peptide forming an alpha-helix in watery and membraneous environments, enabling it to perforate membranes. Active against Gram-negative bacteria E.coli DH5alpha (MIC=5 uM), E.coli MH1 (MIC=0.6 uM) and P.aeruginosa PAO1 (MIC=10 uM) and against Gram-positive bacteria B.subtilis VKM B-501 (MIC=0.6 uM) and A.globiformis VKM Ac-1112 (MIC=0.2 uM). Has cytolytic and hemolytic activity. This Ectatomma brunneum (Ant) protein is M-ectatotoxin-Eb2a.